Consider the following 531-residue polypeptide: Phosphoinositide phospholipase C 9 (531 aa).

Positions 107-253 (RDMNAPLSHY…LQNKILISRR (147 aa)) constitute a PI-PLC X-box domain. The region spanning 265–385 (ENGVELEIQE…GYVKKPNFLL (121 aa)) is the PI-PLC Y-box domain. Position 276 is a phosphoserine (Ser276). The C2 domain maps to 386–513 (NAGSSGVFYP…EGIRAVPLYD (128 aa)).

It depends on Ca(2+) as a cofactor. As to expression, expressed in leaves, roots, flowers and siliques.

The protein resides in the cell membrane. The catalysed reaction is a 1,2-diacyl-sn-glycero-3-phospho-(1D-myo-inositol-4,5-bisphosphate) + H2O = 1D-myo-inositol 1,4,5-trisphosphate + a 1,2-diacyl-sn-glycerol + H(+). Its function is as follows. The production of the second messenger molecules diacylglycerol (DAG) and inositol 1,4,5-trisphosphate (IP3) is mediated by activated phosphatidylinositol-specific phospholipase C enzymes. The sequence is that of Phosphoinositide phospholipase C 9 (PLC9) from Arabidopsis thaliana (Mouse-ear cress).